The sequence spans 481 residues: Neuronal acetylcholine receptor subunit eat-2 (481 aa).

Positions 1 to 19 are cleaved as a signal peptide; the sequence is MFLLLQILYILLFLNLADT. The Extracellular segment spans residues 20-235; it reads SDDEYRLLKD…MHLKRRTMYY (216 aa). Residue Asn-93 is glycosylated (N-linked (GlcNAc...) asparagine). Residues Cys-147 and Cys-161 are joined by a disulfide bond. Helical transmembrane passes span 236-256, 264-284, and 292-312; these read GLNW…GFTM, VTLQ…VSEV, and IPII…SICV. Residues 313–443 lie on the Cytoplasmic side of the membrane; that stretch reads SLITVNIFYR…WRFMAMVIDR (131 aa). Positions 356 to 384 are disordered; that stretch reads KPKREKKKEEEEDEESNAGGKEEESELIS. A helical transmembrane segment spans residues 444-464; the sequence is ASLFLFTGLIFGTTFVIFAAC.

It belongs to the ligand-gated ion channel (TC 1.A.9) family. Acetylcholine receptor (TC 1.A.9.1) subfamily. In terms of assembly, neuronal AChR seems to be composed of two different type of subunits: alpha and beta.

The protein localises to the postsynaptic cell membrane. The protein resides in the cell membrane. In terms of biological role, after binding acetylcholine, the AChR responds by an extensive change in conformation that affects all subunits and leads to opening of an ion-conducting channel across the plasma membrane. Nicotinic acetylcholine receptor in the MC pharyngeal motor neuron involved in pharyngeal pumping. Has a role in the determination of life span possibly via calorific restriction which affects growth rate, although this is independent of metabolic activity. The polypeptide is Neuronal acetylcholine receptor subunit eat-2 (Caenorhabditis briggsae).